We begin with the raw amino-acid sequence, 364 residues long: Appendage-associated protein (364 aa).

2 coiled-coil regions span residues 142–196 (IIHE…AECR) and 288–313 (RIAQ…ALGK).

Its subcellular location is the secreted. Associates with actin filament appendages that are formed in the inclusion appendages of the parasitophorous vacuole during infection of the host erythrocyte. The protein is Appendage-associated protein of Anaplasma marginale (strain Illinois).